The sequence spans 383 residues: Protein pelota homolog (383 aa).

It belongs to the eukaryotic release factor 1 family. Pelota subfamily. In terms of assembly, component of the Pelota-HBS1L complex, also named Dom34-Hbs1 complex, composed of PELO and HBS1L. A divalent metal cation serves as cofactor.

The protein localises to the cytoplasm. Its function is as follows. Component of the Pelota-HBS1L complex, a complex that recognizes stalled ribosomes and triggers the No-Go Decay (NGD) pathway. In the Pelota-HBS1L complex, PELO recognizes ribosomes stalled at the 3' end of an mRNA and engages stalled ribosomes by destabilizing mRNA in the mRNA channel. Following mRNA extraction from stalled ribosomes by the SKI complex, the Pelota-HBS1L complex promotes recruitment of ABCE1, which drives the disassembly of stalled ribosomes, followed by degradation of damaged mRNAs as part of the NGD pathway. This Xenopus laevis (African clawed frog) protein is Protein pelota homolog (pelo).